A 23-amino-acid polypeptide reads, in one-letter code: Dermaseptin III-like peptide (23 aa).

In terms of tissue distribution, expressed by the skin glands.

The protein localises to the secreted. Possesses a potent antimicrobial activity against bacteria, fungi and protozoa. Probably acts by disturbing membrane functions with its amphipathic structure. The polypeptide is Dermaseptin III-like peptide (Phyllomedusa burmeisteri (Brazilian common walking leaf frog)).